The chain runs to 394 residues: Elongation factor Tu 1 (394 aa).

The region spanning 10–204 (KPHVNVGTIG…ALDTYIPEPE (195 aa)) is the tr-type G domain. The G1 stretch occupies residues 19 to 26 (GHVDHGKT). 19–26 (GHVDHGKT) contributes to the GTP binding site. Thr-26 provides a ligand contact to Mg(2+). The tract at residues 60 to 64 (GITIS) is G2. Residues 81 to 84 (DCPG) form a G3 region. GTP-binding positions include 81 to 85 (DCPGH) and 136 to 139 (NKCD). Positions 136–139 (NKCD) are G4. The interval 174–176 (SAL) is G5.

This sequence belongs to the TRAFAC class translation factor GTPase superfamily. Classic translation factor GTPase family. EF-Tu/EF-1A subfamily. Monomer.

The protein resides in the cytoplasm. It carries out the reaction GTP + H2O = GDP + phosphate + H(+). Functionally, GTP hydrolase that promotes the GTP-dependent binding of aminoacyl-tRNA to the A-site of ribosomes during protein biosynthesis. The polypeptide is Elongation factor Tu 1 (Vibrio vulnificus (strain CMCP6)).